The primary structure comprises 278 residues: Protoheme IX farnesyltransferase (278 aa).

Helical transmembrane passes span 12-32 (VIWL…QTVD), 33-53 (WSKL…SAAF), 83-103 (ALVY…YLLG), 105-125 (LPGL…TIWL), 130-150 (WLNI…GYAL), 157-177 (LPAV…IWAL), 204-224 (VIIS…YLAF), 228-248 (LLGL…SILA), and 257-277 (MWKM…ALVF).

The protein belongs to the UbiA prenyltransferase family. Protoheme IX farnesyltransferase subfamily.

The protein localises to the cell membrane. The enzyme catalyses heme b + (2E,6E)-farnesyl diphosphate + H2O = Fe(II)-heme o + diphosphate. Its pathway is porphyrin-containing compound metabolism; heme O biosynthesis; heme O from protoheme: step 1/1. In terms of biological role, converts heme B (protoheme IX) to heme O by substitution of the vinyl group on carbon 2 of heme B porphyrin ring with a hydroxyethyl farnesyl side group. The chain is Protoheme IX farnesyltransferase from Pyrobaculum islandicum (strain DSM 4184 / JCM 9189 / GEO3).